The primary structure comprises 487 residues: N-succinylglutamate 5-semialdehyde dehydrogenase (487 aa).

Position 221-226 (221-226 (GSSDTG)) interacts with NAD(+). Residues Glu244 and Cys278 contribute to the active site.

The protein belongs to the aldehyde dehydrogenase family. AstD subfamily.

It catalyses the reaction N-succinyl-L-glutamate 5-semialdehyde + NAD(+) + H2O = N-succinyl-L-glutamate + NADH + 2 H(+). It functions in the pathway amino-acid degradation; L-arginine degradation via AST pathway; L-glutamate and succinate from L-arginine: step 4/5. Its function is as follows. Catalyzes the NAD-dependent reduction of succinylglutamate semialdehyde into succinylglutamate. In Burkholderia orbicola (strain MC0-3), this protein is N-succinylglutamate 5-semialdehyde dehydrogenase.